A 144-amino-acid polypeptide reads, in one-letter code: uncharacterized protein (144 aa).

The span at 125–135 (PQQQNNHQLQS) shows a compositional bias: polar residues. The segment at 125–144 (PQQQNNHQLQSKPKAASISR) is disordered.

This is an uncharacterized protein from Rickettsia prowazekii (strain Madrid E).